A 53-amino-acid polypeptide reads, in one-letter code: Photosystem II reaction center protein K (53 aa).

Positions 1–16 are excised as a propeptide; the sequence is MFYTNVETLLNTNCFA. A helical membrane pass occupies residues 28–48; that stretch reads LVDVLPIIPLLFLLLAFVWQA.

Belongs to the PsbK family. PSII is composed of 1 copy each of membrane proteins PsbA, PsbB, PsbC, PsbD, PsbE, PsbF, PsbH, PsbI, PsbJ, PsbK, PsbL, PsbM, PsbT, PsbY, PsbZ, Psb30/Ycf12, at least 3 peripheral proteins of the oxygen-evolving complex and a large number of cofactors. It forms dimeric complexes.

The protein resides in the plastid. It is found in the chloroplast thylakoid membrane. Functionally, one of the components of the core complex of photosystem II (PSII). PSII is a light-driven water:plastoquinone oxidoreductase that uses light energy to abstract electrons from H(2)O, generating O(2) and a proton gradient subsequently used for ATP formation. It consists of a core antenna complex that captures photons, and an electron transfer chain that converts photonic excitation into a charge separation. The protein is Photosystem II reaction center protein K of Euglena anabaena (Euglenaria anabaena).